Here is a 262-residue protein sequence, read N- to C-terminus: MIDKTAFIHPSSIVEEGAIIGAGVYIGPFCIVGSQVEIGAGTELKSHVVVNGITKIGCDNQIYQFASIGEANQDLKYAGEPTRVEVGDRNRIRESVTIHRGTTQGGGVTKVGCDNLLMVNTHVAHDCVIGNRCILANNAALGGHVEIDDYAIIGGMTAIHQFCVIGAHVMVGGCSGITQDVPPFVIAQGNHATPFGINIEGLKRRGFDKESLHAIRSAYKLLYRSGRTLDEVKPEIAELAEQYPVVKAFNDFFARSTRGIIR.

This sequence belongs to the transferase hexapeptide repeat family. LpxA subfamily. In terms of assembly, homotrimer.

The protein localises to the cytoplasm. It catalyses the reaction a (3R)-hydroxyacyl-[ACP] + UDP-N-acetyl-alpha-D-glucosamine = a UDP-3-O-[(3R)-3-hydroxyacyl]-N-acetyl-alpha-D-glucosamine + holo-[ACP]. It functions in the pathway glycolipid biosynthesis; lipid IV(A) biosynthesis; lipid IV(A) from (3R)-3-hydroxytetradecanoyl-[acyl-carrier-protein] and UDP-N-acetyl-alpha-D-glucosamine: step 1/6. Functionally, involved in the biosynthesis of lipid A, a phosphorylated glycolipid that anchors the lipopolysaccharide to the outer membrane of the cell. This Yersinia pseudotuberculosis serotype O:1b (strain IP 31758) protein is Acyl-[acyl-carrier-protein]--UDP-N-acetylglucosamine O-acyltransferase.